The chain runs to 210 residues: Small ribosomal subunit protein uS7 (210 aa).

The protein belongs to the universal ribosomal protein uS7 family.

In Podocoryna carnea (Hydrozoan), this protein is Small ribosomal subunit protein uS7 (RPS5).